We begin with the raw amino-acid sequence, 30 residues long: Cycloviolacin-O20 (30 aa).

Residues 1–30 (GIPCGESCVWIPCLTSAIGCSCKSKVCYRD) constitute a cross-link (cyclopeptide (Gly-Asp)). Disulfide bonds link cysteine 4/cysteine 20, cysteine 8/cysteine 22, and cysteine 13/cysteine 27.

In terms of processing, this is a cyclic peptide.

Probably participates in a plant defense mechanism. This is Cycloviolacin-O20 from Viola odorata (Sweet violet).